Consider the following 229-residue polypeptide: Sorting nexin-10A (229 aa).

Residues 11-128 (FISVWVRDPQ…HLFLQSQLSI (118 aa)) form the PX domain. A 1,2-diacyl-sn-glycero-3-phospho-(1D-myo-inositol-3-phosphate) is bound by residues Arg54 and Arg95.

This sequence belongs to the sorting nexin family.

It localises to the cytoplasm. The protein localises to the endosome membrane. It is found in the cytoskeleton. Its subcellular location is the microtubule organizing center. The protein resides in the centrosome. Probable phosphoinositide-binding protein involved in protein sorting and membrane trafficking in endosomes. May play a role in cilium biogenesis through regulation of the transport and the localization of proteins to the cilium. In Danio rerio (Zebrafish), this protein is Sorting nexin-10A (snx10a).